We begin with the raw amino-acid sequence, 459 residues long: uncharacterized protein (459 aa).

Lys285 carries the post-translational modification N6-(pyridoxal phosphate)lysine.

The protein belongs to the class-III pyridoxal-phosphate-dependent aminotransferase family.

The protein localises to the cytoplasm. This is an uncharacterized protein from Schizosaccharomyces pombe (strain 972 / ATCC 24843) (Fission yeast).